A 390-amino-acid polypeptide reads, in one-letter code: Putative gustatory receptor 36c (390 aa).

Topologically, residues 1–4 (MDLE) are cytoplasmic. The chain crosses the membrane as a helical span at residues 5-25 (SFLLGAVYYYGLFIGLSNFEF). Residues 26 to 36 (DWNTGRVFTKK) lie on the Extracellular side of the membrane. A helical transmembrane segment spans residues 37–57 (WSTLYAIALDSCIFALYIYHW). Topologically, residues 58–75 (TGNTNIVNAIFGRANMLH) are cytoplasmic. The helical transmembrane segment at 76–96 (EYVVAILTGLRIVTGLFTLIL) threads the bilayer. Topologically, residues 97–132 (RWYQRCKMMDLASKVVRMYVARPQVRRMSRWGILTK) are extracellular. The chain crosses the membrane as a helical span at residues 133–153 (FIFGSITDGLQMAMVLSAMGS). Topologically, residues 154–165 (VDSQFYLGLGLQ) are cytoplasmic. Residues 166-186 (YWMFVILNMAMMQQHMIMLFV) form a helical membrane-spanning segment. Residues 187–254 (RTQFQLINTE…MEEVFGIQGA (68 aa)) lie on the Extracellular side of the membrane. The helical transmembrane segment at 255 to 275 (MTYGGYYLSSVGTCYLAYSIL) threads the bilayer. The Cytoplasmic portion of the chain corresponds to 276–288 (KHGYENLSMTLST). Residues 289–309 (VILAYSWCFFYYLDGMLNLSV) form a helical membrane-spanning segment. The Extracellular segment spans residues 310-390 (MLHVQDDYWE…FLIQYDIEHF (81 aa)).

The protein belongs to the insect chemoreceptor superfamily. Gustatory receptor (GR) family. Gr22e subfamily. In terms of tissue distribution, expressed in neurons of the terminal external chemosensory organ of larvae.

The protein resides in the cell membrane. In terms of biological role, probable gustatory receptor which mediates acceptance or avoidance behavior, depending on its substrates. The protein is Putative gustatory receptor 36c (Gr36c) of Drosophila melanogaster (Fruit fly).